Here is a 197-residue protein sequence, read N- to C-terminus: Dephospho-CoA kinase (197 aa).

Positions 2–197 (IIGLTGGIAS…GAIKDLANLV (196 aa)) constitute a DPCK domain. 10-15 (ASGKST) is a binding site for ATP.

This sequence belongs to the CoaE family.

Its subcellular location is the cytoplasm. The catalysed reaction is 3'-dephospho-CoA + ATP = ADP + CoA + H(+). The protein operates within cofactor biosynthesis; coenzyme A biosynthesis; CoA from (R)-pantothenate: step 5/5. In terms of biological role, catalyzes the phosphorylation of the 3'-hydroxyl group of dephosphocoenzyme A to form coenzyme A. The sequence is that of Dephospho-CoA kinase from Streptococcus thermophilus (strain CNRZ 1066).